The following is a 211-amino-acid chain: MTKVLFITANPNSAEGSFGMAVGEAFIEAYKNEHPQDEVVTIDLFNTTVPAIDADVFAAWGKFAAGEGFEALTEAQQQKVAAMNTNLETFMHADRYVFVTPMWNFSYPPVVKAYLDNLAIAGKTFKYTENGPVGLLEGKKALHIQATGGVYSEGPYAAVDFGRNHLKTVLGFIGVNETEYIAVEGMNANPEKAQEIKEAAIANARELAKRF.

Met102–Phe105 serves as a coordination point for FMN.

Belongs to the azoreductase type 1 family. In terms of assembly, homodimer. It depends on FMN as a cofactor.

The enzyme catalyses 2 a quinone + NADH + H(+) = 2 a 1,4-benzosemiquinone + NAD(+). It carries out the reaction N,N-dimethyl-1,4-phenylenediamine + anthranilate + 2 NAD(+) = 2-(4-dimethylaminophenyl)diazenylbenzoate + 2 NADH + 2 H(+). In terms of biological role, quinone reductase that provides resistance to thiol-specific stress caused by electrophilic quinones. Also exhibits azoreductase activity. Catalyzes the reductive cleavage of the azo bond in aromatic azo compounds to the corresponding amines. This is FMN-dependent NADH:quinone oxidoreductase 2 from Bacillus thuringiensis subsp. konkukian (strain 97-27).